Reading from the N-terminus, the 426-residue chain is Serine--tRNA ligase (426 aa).

233–235 (TAE) is a binding site for L-serine. 264 to 266 (RSE) is a binding site for ATP. Residue glutamate 287 participates in L-serine binding. 351-354 (EISS) serves as a coordination point for ATP. Position 387 (serine 387) interacts with L-serine.

Belongs to the class-II aminoacyl-tRNA synthetase family. Type-1 seryl-tRNA synthetase subfamily. As to quaternary structure, homodimer. The tRNA molecule binds across the dimer.

The protein resides in the cytoplasm. It catalyses the reaction tRNA(Ser) + L-serine + ATP = L-seryl-tRNA(Ser) + AMP + diphosphate + H(+). The enzyme catalyses tRNA(Sec) + L-serine + ATP = L-seryl-tRNA(Sec) + AMP + diphosphate + H(+). The protein operates within aminoacyl-tRNA biosynthesis; selenocysteinyl-tRNA(Sec) biosynthesis; L-seryl-tRNA(Sec) from L-serine and tRNA(Sec): step 1/1. Functionally, catalyzes the attachment of serine to tRNA(Ser). Is also able to aminoacylate tRNA(Sec) with serine, to form the misacylated tRNA L-seryl-tRNA(Sec), which will be further converted into selenocysteinyl-tRNA(Sec). The polypeptide is Serine--tRNA ligase (Clostridium botulinum (strain 657 / Type Ba4)).